Reading from the N-terminus, the 94-residue chain is Large ribosomal subunit protein bL27 (94 aa).

Residues Met-1–Phe-9 constitute a propeptide that is removed on maturation. Residues Phe-9–Ala-33 form a disordered region.

Belongs to the bacterial ribosomal protein bL27 family. Post-translationally, the N-terminus is cleaved by ribosomal processing cysteine protease Prp.

The sequence is that of Large ribosomal subunit protein bL27 from Streptococcus pneumoniae serotype 4 (strain ATCC BAA-334 / TIGR4).